We begin with the raw amino-acid sequence, 357 residues long: Homeobox protein HMX3 (357 aa).

Disordered stretches follow at residues 1-58 (MPEP…LFAP) and 129-229 (LPRP…RKKK). The segment covering 16-27 (PQPPPPPPPAPK) has biased composition (pro residues). 2 stretches are compositionally biased toward basic and acidic residues: residues 130–140 (PRPEASEKALL) and 149–173 (TDRD…KSPD). Phosphoserine occurs at positions 153 and 180. Residues 191 to 209 (AAPGAAGASVGAAAATPGA) show a composition bias toward low complexity. The segment covering 210 to 223 (EDWKKGAESPEKKP) has biased composition (basic and acidic residues). Residues 227-286 (KKKTRTVFSRSQVFQLESTFDMKRYLSSSERAGLAASLHLTETQVKIWFQNRRNKWKRQL) constitute a DNA-binding region (homeobox).

Belongs to the HMX homeobox family.

Its subcellular location is the nucleus. Transcription factor involved in specification of neuronal cell types and which is required for inner ear and hypothalamus development. Binds to the 5'-CAAGTG-3' core sequence. Controls semicircular canal formation in the inner ear. Also required for hypothalamic/pituitary axis of the CNS. This chain is Homeobox protein HMX3 (HMX3), found in Homo sapiens (Human).